Here is a 367-residue protein sequence, read N- to C-terminus: Queuine tRNA-ribosyltransferase (367 aa).

The active-site Proton acceptor is the D92. Substrate-binding positions include 92 to 96 (DSGGF), D146, Q188, and G215. Positions 246-252 (GVGTPKD) are RNA binding. D265 acts as the Nucleophile in catalysis. The Zn(2+) site is built by C303, C305, C308, and H334.

This sequence belongs to the queuine tRNA-ribosyltransferase family. In terms of assembly, homodimer. Within each dimer, one monomer is responsible for RNA recognition and catalysis, while the other monomer binds to the replacement base PreQ1. Requires Zn(2+) as cofactor.

The enzyme catalyses 7-aminomethyl-7-carbaguanine + guanosine(34) in tRNA = 7-aminomethyl-7-carbaguanosine(34) in tRNA + guanine. The protein operates within tRNA modification; tRNA-queuosine biosynthesis. In terms of biological role, catalyzes the base-exchange of a guanine (G) residue with the queuine precursor 7-aminomethyl-7-deazaguanine (PreQ1) at position 34 (anticodon wobble position) in tRNAs with GU(N) anticodons (tRNA-Asp, -Asn, -His and -Tyr). Catalysis occurs through a double-displacement mechanism. The nucleophile active site attacks the C1' of nucleotide 34 to detach the guanine base from the RNA, forming a covalent enzyme-RNA intermediate. The proton acceptor active site deprotonates the incoming PreQ1, allowing a nucleophilic attack on the C1' of the ribose to form the product. After dissociation, two additional enzymatic reactions on the tRNA convert PreQ1 to queuine (Q), resulting in the hypermodified nucleoside queuosine (7-(((4,5-cis-dihydroxy-2-cyclopenten-1-yl)amino)methyl)-7-deazaguanosine). In Francisella tularensis subsp. novicida (strain U112), this protein is Queuine tRNA-ribosyltransferase.